The following is a 392-amino-acid chain: Membrane cofactor protein (392 aa).

Positions 1-34 (MEPPGRRECPFPSWRFPGLLLAAMVLLLYSFSDA) are cleaved as a signal peptide. Cystine bridges form between Cys-35–Cys-80, Cys-64–Cys-94, Cys-99–Cys-141, Cys-127–Cys-157, Cys-162–Cys-210, Cys-191–Cys-223, Cys-228–Cys-270, and Cys-256–Cys-283. Sushi domains follow at residues 35-96 (CEEP…ACYR), 97-159 (ETCP…ICEK), 160-225 (VLCT…ECKV), and 226-285 (VKCR…KCLK). Residues 35–343 (CEEPPTFEAM…PEEGILDSLD (309 aa)) lie on the Extracellular side of the membrane. N-linked (GlcNAc...) asparagine glycosylation is found at Asn-83 and Asn-114. Thr-163 carries O-linked (GalNAc...) threonine glycosylation. N-linked (GlcNAc...) asparagine glycosylation occurs at Asn-273. O-linked (GalNAc...) serine glycosylation is found at Ser-290 and Ser-291. Positions 291 to 315 (STKPPALSHSVSTSSTTKSPASSAS) are enriched in low complexity. The segment at 291–328 (STKPPALSHSVSTSSTTKSPASSASGPRPTYKPPVSNY) is disordered. O-linked (GalNAc...) threonine glycosylation is present at Thr-292. 3 O-linked (GalNAc...) serine glycosylation sites follow: Ser-298, Ser-300, and Ser-302. Thr-303 carries an O-linked (GalNAc...) threonine glycan. Residues Ser-304 and Ser-305 are each glycosylated (O-linked (GalNAc...) serine). O-linked (GalNAc...) threonine glycosylation is found at Thr-306 and Thr-307. O-linked (GalNAc...) serine glycosylation is found at Ser-309, Ser-312, Ser-313, and Ser-315. Residue Thr-320 is glycosylated (O-linked (GalNAc...) threonine). The residue at position 321 (Tyr-321) is a Phosphotyrosine. An O-linked (GalNAc...) serine glycan is attached at Ser-326. Asp-340, Ile-354, Val-355, Leu-369, Gln-370, and His-384 each carry phosphotyrosine. Residues 344 to 366 (VWVIAVIVIAIVVGVAVICVVPY) traverse the membrane as a helical segment. The Cytoplasmic segment spans residues 367–392 (RYLQRRKKKGTYLTDETHREVKFTSL).

Interacts with C3b. Interacts with C4b. Interacts with moesin/MSN. In terms of assembly, (Microbial infection) Interacts (via N-terminus) with measles virus H protein; this interaction allows attachment and viral entry of vaccine and laboratory-adapted strains. As to quaternary structure, (Microbial infection) Interacts with human herpesvirus 6 GH protein. (Microbial infection) Interacts with human adenovirus B/D fiber protein. In terms of assembly, (Microbial infection) Binds to Streptococcus pyogenes M protein and to type IV pili from Neisseria. Post-translationally, N-glycosylated on Asn-83; Asn-114 and Asn-273 in most tissues, but probably less N-glycosylated in testis. N-glycosylation on Asn-114 and Asn-273 is required for cytoprotective function. N-glycosylation on Asn-114 is required for Measles virus binding. N-glycosylation on Asn-273 is required for Neisseria binding. N-glycosylation is not required for human adenovirus binding. Extensively O-glycosylated in the Ser/Thr-rich domain. O-glycosylation is required for Neisseria binding but not for Measles virus or human adenovirus binding. In terms of processing, in epithelial cells, isoforms B/D/F/H/J/L/3 are phosphorylated by YES1 in response to infection by Neisseria gonorrhoeae; which promotes infectivity. In T-cells, these isoforms may be phosphorylated by LCK. Expressed by all cells except erythrocytes.

Its subcellular location is the cytoplasmic vesicle. The protein resides in the secretory vesicle. The protein localises to the acrosome inner membrane. Functionally, acts as a cofactor for complement factor I, a serine protease which protects autologous cells against complement-mediated injury by cleaving C3b and C4b deposited on host tissue. May be involved in the fusion of the spermatozoa with the oocyte during fertilization. Also acts as a costimulatory factor for T-cells which induces the differentiation of CD4+ into T-regulatory 1 cells. T-regulatory 1 cells suppress immune responses by secreting interleukin-10, and therefore are thought to prevent autoimmunity. In terms of biological role, (Microbial infection) A number of viral and bacterial pathogens seem to bind MCP in order to exploit its immune regulation property and directly induce an immunosuppressive phenotype in T-cells. Its function is as follows. (Microbial infection) Acts as a receptor for Adenovirus subgroup B2 and Ad3. (Microbial infection) Acts as a receptor for cultured Measles virus. Functionally, (Microbial infection) Acts as a receptor for Herpesvirus 6/HHV-6. In terms of biological role, (Microbial infection) May act as a receptor for pathogenic bacteria Neisseria and Streptococcus pyogenes. The sequence is that of Membrane cofactor protein (CD46) from Homo sapiens (Human).